A 387-amino-acid polypeptide reads, in one-letter code: ATP phosphoribosyltransferase regulatory subunit (387 aa).

Belongs to the class-II aminoacyl-tRNA synthetase family. HisZ subfamily. Heteromultimer composed of HisG and HisZ subunits.

Its subcellular location is the cytoplasm. Its pathway is amino-acid biosynthesis; L-histidine biosynthesis; L-histidine from 5-phospho-alpha-D-ribose 1-diphosphate: step 1/9. Functionally, required for the first step of histidine biosynthesis. May allow the feedback regulation of ATP phosphoribosyltransferase activity by histidine. This Polynucleobacter necessarius subsp. necessarius (strain STIR1) protein is ATP phosphoribosyltransferase regulatory subunit.